A 562-amino-acid chain; its full sequence is Solute carrier family 22 member 6 (562 aa).

At 1-15 the chain is on the cytoplasmic side; sequence MPFSELLEQVGSTGR. Residues 16-36 traverse the membrane as a helical segment; that stretch reads FQVLHVTLLCIPVLMMASHNL. Residues 37-147 lie on the Extracellular side of the membrane; the sequence is LQNFVATVPS…LVCDMHSFKQ (111 aa). A helical membrane pass occupies residues 148–168; the sequence is MGQTIYMGGVLVGALLFGGLS. Topologically, residues 169-174 are cytoplasmic; it reads DRYGRR. Residues 175–195 traverse the membrane as a helical segment; the sequence is ILLLISNLLMAVSGTCAAFSS. The Extracellular segment spans residues 196-205; that stretch reads SFSLFCVFRF. A helical membrane pass occupies residues 206 to 226; that stretch reads GCGLALSGLGLNTFSLIVEWI. The Cytoplasmic portion of the chain corresponds to 227–235; sequence PTRIRTAVG. The helical transmembrane segment at 236–256 threads the bilayer; it reads TTTGYCYTLGQLILVLLAYFI. Residues 257–260 are Extracellular-facing; it reads RDWR. The helical transmembrane segment at 261–281 threads the bilayer; sequence WLTLAVSLPFYVFFLIAWWFH. Topologically, residues 282 to 351 are cytoplasmic; sequence ESSRWLALSN…FNTPAMRKRT (70 aa). A helical transmembrane segment spans residues 352 to 372; that stretch reads LCLSAVWLSTSFAYYGLAMDL. Over 373-378 the chain is Extracellular; sequence DKFGVD. A helical membrane pass occupies residues 379-399; the sequence is IYLIQVIFGAVDIPAKVVVVV. Residues 400-408 lie on the Cytoplasmic side of the membrane; the sequence is SMSLIGRRR. The chain crosses the membrane as a helical span at residues 409–429; that stretch reads SQCAVLVVAGITILLNLLVPY. The Extracellular segment spans residues 430–444; it reads DKQTIRTCLAVLGKG. The chain crosses the membrane as a helical span at residues 445-465; sequence CLAASFNCCYLYSGELFPTII. Residues 466–468 are Cytoplasmic-facing; it reads RQN. A helical transmembrane segment spans residues 469–489; the sequence is GMGWVSMMARIGAMVAPMVLL. The Extracellular segment spans residues 490–495; it reads TRDYIP. Residues 496–516 form a helical membrane-spanning segment; that stretch reads WLPGLIYGGAPILSGLAAIFL. Topologically, residues 517-562 are cytoplasmic; the sequence is PETLGYPLPDTIQDVEESGSGRKSKMSTKETITLQDKQANLLKQSA.

It belongs to the major facilitator (TC 2.A.1) superfamily. Organic cation transporter (TC 2.A.1.19) family. In terms of processing, glycosylated. Glycosylation is necessary for proper targeting of the transporter to the plasma membrane.

Its subcellular location is the cell membrane. The protein resides in the basolateral cell membrane. The protein localises to the basal cell membrane. Involved in the renal elimination of endogenous and exogenous organic anions. Functions as organic anion exchanger when the uptake of one molecule of organic anion is coupled with an efflux of one molecule of endogenous dicarboxylic acid (glutarate, ketoglutarate, etc). Mediates the sodium-independent uptake of p-aminohippurate (PAH), 2,3-dimercapto-1-propanesulfonic acid (DMPS), cidofovir, adefovir, 9-(2-phosphonylmethoxyethyl) guanine (PMEG), 9-(2-phosphonylmethoxyethyl) diaminopurine (PMEDAP), ochratoxin (OTA), acyclovir (ACV), 3'-azido-3-'deoxythymidine (AZT), cimetidine (CMD), 2,4-dichloro-phenoxyacetate (2,4-D), hippurate (HA), indoleacetate (IA), indoxyl sulfate (IS), 3-carboxy-4-methyl-5-propyl-2-furanpropionate (CMPF) and edaravone sulfate. Mediates the sodium-independent uptake of p-aminohippurate (PAH). PAH uptake is inhibited by p-chloromercuribenzenesulphonate (PCMBS), diethyl pyrocarbonate (DEPC), indomethacin, sulindac, diclofenac, carprofen, okadaic acid, benzothiazolylcysteine (BTC), S-chlorotrifluoroethylcysteine (CTFC), cysteine S-conjugates S-dichlorovinylcysteine (DCVC), furosemide, steviol, phorbol 12-myristate 13-acetate (PMA), calcium ionophore A23187, benzylpenicillin, bumetamide, losartan, probenecid, phenol red, urate, glutarate and alpha-ketoglutarate. PAH uptake is inhibited by glutarate. The protein is Solute carrier family 22 member 6 (SLC22A6) of Pseudopleuronectes americanus (Winter flounder).